A 358-amino-acid polypeptide reads, in one-letter code: Aminomethyltransferase (358 aa).

The protein belongs to the GcvT family. In terms of assembly, the glycine cleavage system is composed of four proteins: P, T, L and H.

The enzyme catalyses N(6)-[(R)-S(8)-aminomethyldihydrolipoyl]-L-lysyl-[protein] + (6S)-5,6,7,8-tetrahydrofolate = N(6)-[(R)-dihydrolipoyl]-L-lysyl-[protein] + (6R)-5,10-methylene-5,6,7,8-tetrahydrofolate + NH4(+). In terms of biological role, the glycine cleavage system catalyzes the degradation of glycine. The chain is Aminomethyltransferase from Francisella tularensis subsp. tularensis (strain WY96-3418).